We begin with the raw amino-acid sequence, 244 residues long: Cell division protein DivIB (244 aa).

Residues 1–6 (MKIKWP) lie on the Cytoplasmic side of the membrane. The chain crosses the membrane as a helical span at residues 7–27 (LQLWISLAVFVTIAVGTLLLL). One can recognise a POTRA domain in the interval 28–104 (QPWQTIKTVT…IDIAEKVTAG (77 aa)). The Extracellular portion of the chain corresponds to 28-244 (QPWQTIKTVT…KADNKAHQKQ (217 aa)).

It belongs to the FtsQ/DivIB family. DivIB subfamily.

It is found in the cell membrane. Functionally, cell division protein that may be involved in stabilizing or promoting the assembly of the division complex. The chain is Cell division protein DivIB from Leuconostoc kimchii (strain IMSNU 11154 / KCTC 2386 / IH25).